The primary structure comprises 359 residues: Hyaluronan and proteoglycan link protein 3 (359 aa).

The first 17 residues, 1–17, serve as a signal peptide directing secretion; that stretch reads MSLLFLVLLSPFPCVLG. The 117-residue stretch at 48 to 164 folds into the Ig-like V-type domain; that stretch reads KLVVETTEES…ESGLVELELR (117 aa). Disulfide bonds link Cys70-Cys146, Cys188-Cys259, Cys212-Cys233, Cys286-Cys355, and Cys311-Cys332. Link domains are found at residues 166–261 and 266–357; these read VVFP…FCFA and GRVY…YCYV.

This sequence belongs to the HAPLN family.

The protein resides in the secreted. The protein localises to the extracellular space. Its subcellular location is the extracellular matrix. In terms of biological role, may function in hyaluronic acid binding. The sequence is that of Hyaluronan and proteoglycan link protein 3 (Hapln3) from Mus musculus (Mouse).